The sequence spans 150 residues: uncharacterized protein (150 aa).

Residues 1–28 (MPLDVWIAFSYFIDFFQWLFMLNAEVMR) form the signal peptide.

This is an uncharacterized protein from Archaeoglobus fulgidus (strain ATCC 49558 / DSM 4304 / JCM 9628 / NBRC 100126 / VC-16).